A 675-amino-acid polypeptide reads, in one-letter code: DNA ligase (675 aa).

NAD(+) contacts are provided by residues 32 to 36 (DAEYD), 81 to 82 (SL), and glutamate 113. Catalysis depends on lysine 115, which acts as the N6-AMP-lysine intermediate. Residues arginine 136, glutamate 173, lysine 291, and lysine 315 each contribute to the NAD(+) site. Cysteine 409, cysteine 412, cysteine 427, and cysteine 433 together coordinate Zn(2+). The BRCT domain occupies 595–675 (SEKTYFFNKK…ELNSLIRIKE (81 aa)).

This sequence belongs to the NAD-dependent DNA ligase family. LigA subfamily. Requires Mg(2+) as cofactor. The cofactor is Mn(2+).

The enzyme catalyses NAD(+) + (deoxyribonucleotide)n-3'-hydroxyl + 5'-phospho-(deoxyribonucleotide)m = (deoxyribonucleotide)n+m + AMP + beta-nicotinamide D-nucleotide.. In terms of biological role, DNA ligase that catalyzes the formation of phosphodiester linkages between 5'-phosphoryl and 3'-hydroxyl groups in double-stranded DNA using NAD as a coenzyme and as the energy source for the reaction. It is essential for DNA replication and repair of damaged DNA. The protein is DNA ligase of Buchnera aphidicola subsp. Acyrthosiphon pisum (strain 5A).